We begin with the raw amino-acid sequence, 860 residues long: Leucine--tRNA ligase (860 aa).

A 'HIGH' region motif is present at residues 42–52 (PYPSGRLHMGH). The short motif at 619-623 (KMSKS) is the 'KMSKS' region element. Residue lysine 622 participates in ATP binding.

The protein belongs to the class-I aminoacyl-tRNA synthetase family.

Its subcellular location is the cytoplasm. The catalysed reaction is tRNA(Leu) + L-leucine + ATP = L-leucyl-tRNA(Leu) + AMP + diphosphate. This Cronobacter sakazakii (strain ATCC BAA-894) (Enterobacter sakazakii) protein is Leucine--tRNA ligase.